The primary structure comprises 89 residues: Cornifin-B (89 aa).

The disordered stretch occupies residues 1–29 (MSSQQQKQPCTPPPQLQQQQVKQPCQPPP). 8 tandem repeats follow at residues 3–14 (SQQQKQPCTPPP), 18–29 (QQQVKQPCQPPP), 31–38 (EPCIPKTK), 39–46 (EPCHPKVP), 47–54 (EPCHPKVP), 55–62 (EPCQPKVP), 63–70 (EPCHPKVP), and 71–78 (EPCPSIVT). The segment at 3 to 29 (SQQQKQPCTPPPQLQQQQVKQPCQPPP) is 2 X 12 AA approximate repeats. The segment at 31 to 78 (EPCIPKTKEPCHPKVPEPCHPKVPEPCQPKVPEPCHPKVPEPCPSIVT) is 6 X 8 AA approximate tandem repeats.

The protein belongs to the cornifin (SPRR) family. Post-translationally, the N-terminus is blocked. Suprabasal layers of squamous-differentiated tissues such as epidermis, esophagus, tongue and trachea.

The protein resides in the cytoplasm. Its function is as follows. Cross-linked envelope protein of keratinocytes. It is a keratinocyte protein that first appears in the cell cytosol, but ultimately becomes cross-linked to membrane proteins by transglutaminase. All that results in the formation of an insoluble envelope beneath the plasma membrane. Can function as both amine donor and acceptor in transglutaminase-mediated cross-linkage. The polypeptide is Cornifin-B (SPRR1B) (Homo sapiens (Human)).